We begin with the raw amino-acid sequence, 257 residues long: 3-methyl-2-oxobutanoate hydroxymethyltransferase (257 aa).

Mg(2+) is bound by residues Asp-42 and Asp-86. 3-methyl-2-oxobutanoate-binding positions include 42-43 (DS), Asp-86, and Lys-116. Glu-118 is a Mg(2+) binding site. Glu-185 acts as the Proton acceptor in catalysis.

Belongs to the PanB family. In terms of assembly, homodecamer; pentamer of dimers. Mg(2+) serves as cofactor.

The protein resides in the cytoplasm. The catalysed reaction is 3-methyl-2-oxobutanoate + (6R)-5,10-methylene-5,6,7,8-tetrahydrofolate + H2O = 2-dehydropantoate + (6S)-5,6,7,8-tetrahydrofolate. It functions in the pathway cofactor biosynthesis; (R)-pantothenate biosynthesis; (R)-pantoate from 3-methyl-2-oxobutanoate: step 1/2. Catalyzes the reversible reaction in which hydroxymethyl group from 5,10-methylenetetrahydrofolate is transferred onto alpha-ketoisovalerate to form ketopantoate. The protein is 3-methyl-2-oxobutanoate hydroxymethyltransferase of Prochlorococcus marinus (strain MIT 9215).